An 85-amino-acid polypeptide reads, in one-letter code: Small ribosomal subunit protein uS17 (85 aa).

Belongs to the universal ribosomal protein uS17 family. In terms of assembly, part of the 30S ribosomal subunit.

One of the primary rRNA binding proteins, it binds specifically to the 5'-end of 16S ribosomal RNA. The sequence is that of Small ribosomal subunit protein uS17 from Acetivibrio thermocellus (strain ATCC 27405 / DSM 1237 / JCM 9322 / NBRC 103400 / NCIMB 10682 / NRRL B-4536 / VPI 7372) (Clostridium thermocellum).